The primary structure comprises 48 residues: MPQLVPFFFVNQVVFAFIVLTVLIYAFSKYILPRLLRTYISRIYINKL.

A helical membrane pass occupies residues 4-24 (LVPFFFVNQVVFAFIVLTVLI).

It belongs to the ATPase protein 8 family. In terms of assembly, F-type ATPases have 2 components, CF(1) - the catalytic core - and CF(0) - the membrane proton channel.

Its subcellular location is the mitochondrion membrane. Its function is as follows. Mitochondrial membrane ATP synthase (F(1)F(0) ATP synthase or Complex V) produces ATP from ADP in the presence of a proton gradient across the membrane which is generated by electron transport complexes of the respiratory chain. F-type ATPases consist of two structural domains, F(1) - containing the extramembraneous catalytic core and F(0) - containing the membrane proton channel, linked together by a central stalk and a peripheral stalk. During catalysis, ATP synthesis in the catalytic domain of F(1) is coupled via a rotary mechanism of the central stalk subunits to proton translocation. Part of the complex F(0) domain. Minor subunit located with subunit a in the membrane. This chain is ATP synthase protein 8 (atp8), found in Emericella nidulans (Aspergillus nidulans).